A 104-amino-acid chain; its full sequence is L-rhamnose mutarotase (104 aa).

Residue Y18 participates in substrate binding. Residue H22 is the Proton donor of the active site. Substrate-binding positions include Y41 and 76–77 (WW).

Belongs to the rhamnose mutarotase family. As to quaternary structure, homodimer.

The protein localises to the cytoplasm. The catalysed reaction is alpha-L-rhamnose = beta-L-rhamnose. The protein operates within carbohydrate metabolism; L-rhamnose metabolism. Functionally, involved in the anomeric conversion of L-rhamnose. The polypeptide is L-rhamnose mutarotase (Pectobacterium carotovorum subsp. carotovorum (strain PC1)).